We begin with the raw amino-acid sequence, 728 residues long: U-box domain-containing protein 4 (728 aa).

A U-box domain is found at 296–370 (SVPKEFSCPI…SQWCGVYGLQ (75 aa)). ARM repeat units follow at residues 441 to 483 (GAIP…EQEG) and 526 to 568 (GAVE…ESCA).

It carries out the reaction S-ubiquitinyl-[E2 ubiquitin-conjugating enzyme]-L-cysteine + [acceptor protein]-L-lysine = [E2 ubiquitin-conjugating enzyme]-L-cysteine + N(6)-ubiquitinyl-[acceptor protein]-L-lysine.. Its pathway is protein modification; protein ubiquitination. Possesses E3 ubiquitin-protein ligase in vitro. In Oryza sativa subsp. japonica (Rice), this protein is U-box domain-containing protein 4 (PUB4).